Reading from the N-terminus, the 231-residue chain is Large ribosomal subunit protein uL1 (231 aa).

It belongs to the universal ribosomal protein uL1 family. In terms of assembly, part of the 50S ribosomal subunit.

In terms of biological role, binds directly to 23S rRNA. The L1 stalk is quite mobile in the ribosome, and is involved in E site tRNA release. Its function is as follows. Protein L1 is also a translational repressor protein, it controls the translation of the L11 operon by binding to its mRNA. The protein is Large ribosomal subunit protein uL1 of Nitrosococcus oceani (strain ATCC 19707 / BCRC 17464 / JCM 30415 / NCIMB 11848 / C-107).